A 547-amino-acid chain; its full sequence is Ribosome protection protein VmlR (547 aa).

The ABC transporter 1 domain maps to 5 to 200; the sequence is VTLTNVSYEV…FREKKRLTQQ (196 aa). Residue 37-44 participates in ATP binding; it reads GKNGAGKS. The interval 183–289 is antibiotic resistance domain (ARD); the sequence is GNYSGYMKFR…SIDTTHKTGK (107 aa). Coiled coils occupy residues 193-222 and 245-269; these read EKKRLTQQREYEKQQKMVERIEAQMNGLAS and AKRTDAQIKSKQKRLEKELEKAKAE. The region spanning 292–504 is the ABC transporter 2 domain; sequence LEVQNVTKAF…REELRLKLET (213 aa). Residue 324 to 331 participates in ATP binding; sequence GPNGSGKT. The segment at 483–547 is C-terminal extension (CTE); it reads KQLNDVPSER…KELDHQDKKD (65 aa). The stretch at 488 to 543 forms a coiled coil; it reads VPSERNEREELRLKLETERQEVLGKLSFMTPNDKGYKELDQAFNELTKRIKELDHQ.

The protein belongs to the ABC transporter superfamily. ABCF family. ARE2 subfamily. Binds within the E-site of the 70S ribosome, where it contacts ribosomal proteins L1, L5, L33-1, S7, S11, the 16 and 23S rRNAs and the acceptor arm of the P-site tRNA.

The protein resides in the cytoplasm. In terms of biological role, recognizes and binds in the vacant E-site of ribosomes stalled by some peptidyltransferase center (PTC)-targeting antibiotics. Makes contact with the PTC and both ribosomal subunits. Induces conformational changes in the P-site, which allows it to dislodge the antibiotic from its PTC binding site. Binds to ribosomes either directly following translation initation or subsequent to E tRNA release during elongation. Involved in resistance to a narrow spectrum of antibiotics (the streptogramin A antibiotic virginiamycin M, the lincosamide antibiotic lincomycin and the pleuromutilin antibiotic tiamulin). The sequence is that of Ribosome protection protein VmlR from Bacillus subtilis (strain 168).